We begin with the raw amino-acid sequence, 420 residues long: Phosphoribosylamine--glycine ligase (420 aa).

An ATP-grasp domain is found at 108-314; the sequence is KQFMEKYAIP…FAALIDALLH (207 aa). Position 134 to 195 (134 to 195) interacts with ATP; sequence LDERGVPIVI…EDFLAGEEFS (62 aa). The Mg(2+) site is built by glutamate 284 and asparagine 286.

The protein belongs to the GARS family. The cofactor is Mg(2+). It depends on Mn(2+) as a cofactor.

It catalyses the reaction 5-phospho-beta-D-ribosylamine + glycine + ATP = N(1)-(5-phospho-beta-D-ribosyl)glycinamide + ADP + phosphate + H(+). It functions in the pathway purine metabolism; IMP biosynthesis via de novo pathway; N(1)-(5-phospho-D-ribosyl)glycinamide from 5-phospho-alpha-D-ribose 1-diphosphate: step 2/2. The protein is Phosphoribosylamine--glycine ligase of Listeria monocytogenes serotype 4b (strain F2365).